The following is a 328-amino-acid chain: Testis-specific serine/threonine-protein kinase 4 (328 aa).

The Protein kinase domain occupies 25 to 293 (YEVGKAIGHG…ILDIIKDSWV (269 aa)). Residues 31–39 (IGHGSYGSV) and Lys-54 each bind ATP. The active-site Proton acceptor is Asp-148. Residue Thr-197 is modified to Phosphothreonine.

It belongs to the protein kinase superfamily. CAMK Ser/Thr protein kinase family. As to quaternary structure, homodimer. Interacts with HSP90; this interaction stabilizes and activates TSSK4. Interacts with ODF2 (via C-terminus); this interaction promotes ODF2 phosphorylation on 'Ser-95'. May interact with CREM. Interacts with CREB1; this interaction facilitates phosphorylation on 'Ser-133'. Interacts with QRICH2. The cofactor is Mg(2+). In terms of processing, activated by autophosphorylation on Thr-197. ODF2 potentiates the autophosphorylation activity of TSSK4 at Thr-197. Post-translationally, ubiquitinated; HSP90 activity negatively regulates ubiquitination and degradation. In terms of tissue distribution, expressed only in the testis.

The protein localises to the cytoplasmic vesicle. It is found in the secretory vesicle. The protein resides in the acrosome. It localises to the cell projection. Its subcellular location is the cilium. The protein localises to the flagellum. The enzyme catalyses L-seryl-[protein] + ATP = O-phospho-L-seryl-[protein] + ADP + H(+). It carries out the reaction L-threonyl-[protein] + ATP = O-phospho-L-threonyl-[protein] + ADP + H(+). With respect to regulation, activated by phosphorylation on Thr-197. Its function is as follows. Serine/threonine kinase which is involved in male germ cell development and in mature sperm function. May be involved in the Cre/Creb signaling pathway. Phosphorylates CREB1 on 'Ser-133' in vitro and can stimulate Cre/Creb pathway in cells. Phosphorylates CREM on 'Ser-116' in vitro. Phosphorylates ODF2 on 'Ser-95'. In Homo sapiens (Human), this protein is Testis-specific serine/threonine-protein kinase 4.